The following is a 993-amino-acid chain: UPF0182 protein Sare_4110 (993 aa).

Helical transmembrane passes span Ile-18 to Trp-38, Leu-61 to Leu-81, Leu-110 to Gln-130, Gly-171 to Phe-191, Ala-209 to Asp-229, Ile-260 to Met-280, and Leu-283 to Ile-303. Disordered regions lie at residues Gln-892–Ala-937 and Glu-974–Gly-993. The span at Ser-900–Val-929 shows a compositional bias: pro residues. Over residues Ala-976–Gly-993 the composition is skewed to low complexity.

Belongs to the UPF0182 family.

It localises to the cell membrane. In Salinispora arenicola (strain CNS-205), this protein is UPF0182 protein Sare_4110.